Here is a 126-residue protein sequence, read N- to C-terminus: MSWQQYVDQHLVATQCVTMAAICGLDGSIWAKSNGLELSQDEVATLARSFSKDEVLAANGIRIGGTKYIYLSGDDKLIRGKKDRQGVHIVKTKTAMVMALYAEPILPEQCAVVVEKLGDWLIQNDL.

It belongs to the profilin family. In terms of assembly, occurs in many kinds of cells as a complex with monomeric actin in a 1:1 ratio.

The protein localises to the cytoplasm. Its subcellular location is the cytoskeleton. Binds to actin and affects the structure of the cytoskeleton. At high concentrations, profilin prevents the polymerization of actin, whereas it enhances it at low concentrations. By binding to PIP2, it inhibits the formation of IP3 and DG. The polypeptide is Profilin (Branchiostoma belcheri (Amphioxus)).